The following is a 277-amino-acid chain: Undecaprenyl-diphosphatase (277 aa).

The next 8 helical transmembrane spans lie at 11 to 31 (WWQA…PISS), 47 to 67 (AGAS…LIYF), 96 to 116 (VGIL…KAIW), 123 to 143 (LWVI…AEQT), 153 to 173 (LGIW…IPGV), 197 to 217 (SFLL…ISEF), 227 to 247 (LGTL…IQFL), and 254 to 274 (LFIV…ALGF).

It belongs to the UppP family.

It is found in the cell inner membrane. The catalysed reaction is di-trans,octa-cis-undecaprenyl diphosphate + H2O = di-trans,octa-cis-undecaprenyl phosphate + phosphate + H(+). In terms of biological role, catalyzes the dephosphorylation of undecaprenyl diphosphate (UPP). Confers resistance to bacitracin. The sequence is that of Undecaprenyl-diphosphatase from Synechococcus sp. (strain JA-2-3B'a(2-13)) (Cyanobacteria bacterium Yellowstone B-Prime).